The primary structure comprises 435 residues: Histidine--tRNA ligase (435 aa).

The protein belongs to the class-II aminoacyl-tRNA synthetase family.

The protein localises to the cytoplasm. It carries out the reaction tRNA(His) + L-histidine + ATP = L-histidyl-tRNA(His) + AMP + diphosphate + H(+). This Aeropyrum pernix (strain ATCC 700893 / DSM 11879 / JCM 9820 / NBRC 100138 / K1) protein is Histidine--tRNA ligase (hisS).